The following is a 179-amino-acid chain: Large ribosomal subunit protein uL6 (179 aa).

The protein belongs to the universal ribosomal protein uL6 family. Part of the 50S ribosomal subunit.

Functionally, this protein binds to the 23S rRNA, and is important in its secondary structure. It is located near the subunit interface in the base of the L7/L12 stalk, and near the tRNA binding site of the peptidyltransferase center. The polypeptide is Large ribosomal subunit protein uL6 (Prochlorococcus marinus (strain MIT 9211)).